We begin with the raw amino-acid sequence, 673 residues long: Polygalacturonate 4-alpha-galacturonosyltransferase (673 aa).

At 1 to 22 the chain is on the cytoplasmic side; that stretch reads MALKRGLSGVNRIRGSGGGSRS. Residues 23-43 form a helical; Signal-anchor for type II membrane protein membrane-spanning segment; it reads VLVLLIFFCVFAPLCFFVGRG. Topologically, residues 44-673 are lumenal; sequence VYIDSSNDYS…PYLRRCNLHE (630 aa). N-linked (GlcNAc...) asparagine glycosylation is present at Asn-103. The interval 112–136 is disordered; sequence GVDPSFRHSENPATPDVKSNNLNEK. Residues Asn-382, Asn-434, Asn-538, and Asn-585 are each glycosylated (N-linked (GlcNAc...) asparagine).

This sequence belongs to the glycosyltransferase 8 family. Expressed in seedlings, inflorescences, flowers, siliques, pollen, roots, stems and leaves.

It is found in the golgi apparatus membrane. It catalyses the reaction [(1-&gt;4)-alpha-D-galacturonosyl](n) + UDP-alpha-D-galacturonate = [(1-&gt;4)-alpha-D-galacturonosyl](n+1) + UDP + H(+). The protein operates within glycan metabolism; pectin biosynthesis. Its function is as follows. Involved in pectin biosynthesis. Catalyzes the transfer of galacturonic acid from uridine 5'-diphosphogalacturonic acid onto the pectic polysaccharide homogalacturonan. This chain is Polygalacturonate 4-alpha-galacturonosyltransferase (GAUT1), found in Arabidopsis thaliana (Mouse-ear cress).